Consider the following 147-residue polypeptide: MKVILREDIENLGKSGELVTVKDGFGRNFLLPRKKAVLASEQNLRQLEHEKAVIAARNAKLKGAAEEQAKKIGAIKVSIKRRVGDQDKLFGSVTALDIAEAVAAEGQSIDRRHIHLPEPIKALGNYEVELRLHRDVIAKIKLEVLPE.

This sequence belongs to the bacterial ribosomal protein bL9 family.

In terms of biological role, binds to the 23S rRNA. This is Large ribosomal subunit protein bL9 from Myxococcus xanthus (strain DK1622).